Here is a 188-residue protein sequence, read N- to C-terminus: uncharacterized protein (188 aa).

The next 3 helical transmembrane spans lie at 6-26 (MIVF…SLPL), 43-63 (FAGR…ILFA), and 110-130 (ALFL…MIAA).

The protein resides in the membrane. This is an uncharacterized protein from Schizosaccharomyces pombe (strain 972 / ATCC 24843) (Fission yeast).